The primary structure comprises 1194 residues: ATP-dependent RNA helicase DHX30 (1194 aa).

Residues 1–10 are compositionally biased toward basic and acidic residues; that stretch reads MFSLDSFRKD. The segment at 1–27 is disordered; the sequence is MFSLDSFRKDRAQHRQRQCKLPPPRLP. Ser6 carries the phosphoserine modification. A DRBM domain is found at 53 to 121; it reads PKNLLNSVIG…QAAAAACQLF (69 aa). Positions 150 to 199 are disordered; sequence ADSWWRPEPTMPPTSWRQLNPESIRPGGPGGLSRSLGREEEEDEEEELEE. Acidic residues predominate over residues 188–199; the sequence is EEEEDEEEELEE. Phosphoserine is present on residues Ser226 and Ser380. Residues 444-612 enclose the Helicase ATP-binding domain; sequence LNAIEQHPVV…FGGCPVIKVP (169 aa). 457 to 464 is a binding site for ATP; sequence GDTGCGKT. Residues 559 to 562 carry the DEAH box motif; the sequence is DEVH. The 174-residue stretch at 654–827 folds into the Helicase C-terminal domain; the sequence is LVTDLVLHID…NLVLQAKIHM (174 aa).

This sequence belongs to the DEAD box helicase family. DEAH subfamily. As to quaternary structure, identified in a complex with TFAM and SSBP1. Interacts (via N-terminus) with ZC3HAV1 (via N-terminal domain) in an RNA-independent manner. Found in a complex with GRSF1, DDX28, FASTKD2 and FASTKD5.

It localises to the cytoplasm. It is found in the mitochondrion. Its subcellular location is the mitochondrion matrix. The protein localises to the mitochondrion nucleoid. It carries out the reaction ATP + H2O = ADP + phosphate + H(+). In terms of biological role, RNA-dependent helicase. Plays an important role in the assembly of the mitochondrial large ribosomal subunit. Required for optimal function of the zinc-finger antiviral protein ZC3HAV1. Associates with mitochondrial DNA. Involved in nervous system development and differentiation through its involvement in the up-regulation of a number of genes which are required for neurogenesis, including GSC, NCAM1, neurogenin, and NEUROD. This is ATP-dependent RNA helicase DHX30 (DHX30) from Pongo abelii (Sumatran orangutan).